The chain runs to 474 residues: UDP-N-acetylmuramate--L-alanine ligase (474 aa).

Residue 123 to 129 (GTHGKTT) participates in ATP binding.

Belongs to the MurCDEF family.

It is found in the cytoplasm. It carries out the reaction UDP-N-acetyl-alpha-D-muramate + L-alanine + ATP = UDP-N-acetyl-alpha-D-muramoyl-L-alanine + ADP + phosphate + H(+). The protein operates within cell wall biogenesis; peptidoglycan biosynthesis. Cell wall formation. This chain is UDP-N-acetylmuramate--L-alanine ligase, found in Alcanivorax borkumensis (strain ATCC 700651 / DSM 11573 / NCIMB 13689 / SK2).